The primary structure comprises 393 residues: Probable acetyl-CoA acyltransferase (393 aa).

The active-site Acyl-thioester intermediate is Cys-88. Residues His-349 and Cys-378 each act as proton acceptor in the active site.

The protein belongs to the thiolase-like superfamily. Thiolase family.

The protein resides in the cytoplasm. The enzyme catalyses 2 acetyl-CoA = acetoacetyl-CoA + CoA. The polypeptide is Probable acetyl-CoA acyltransferase (Staphylococcus aureus (strain MSSA476)).